The sequence spans 94 residues: Large ribosomal subunit protein bL25 (94 aa).

Belongs to the bacterial ribosomal protein bL25 family. Part of the 50S ribosomal subunit; part of the 5S rRNA/L5/L18/L25 subcomplex. Contacts the 5S rRNA. Binds to the 5S rRNA independently of L5 and L18.

In terms of biological role, this is one of the proteins that binds to the 5S RNA in the ribosome where it forms part of the central protuberance. The protein is Large ribosomal subunit protein bL25 of Salmonella agona (strain SL483).